Consider the following 323-residue polypeptide: MGNSAARSDFEWVYSDQPHTQRRKEMLAKYPSIKALMRPDPNIKWTVLGMVLVQVLACWLVRGLSWRWLLFWAYAFGGCINHSLTLAIHDISHNTAFGTRCASRNRWFAVFANLPIGLPYATSFKKYHVDHHRYLGGDGLDVDIPTDFEGWFFCTPARKLLWLVLQPFFYSLRPLYVNPKAVTRMEILNALVQLAFNVTIFALWGIKAIVYLLASSLLGLGLHPISGHFVAEHYMFLKGHETYSYYGPLNWITFNVGYHVEHHDFPSIPGCYLPLVRMIAPEYYDHLPQHHSWVKVLWDFVFEDSLGPYSRVKRKCKLAKDQL.

The N-myristoyl glycine moiety is linked to residue glycine 2. 2 consecutive transmembrane segments (helical) span residues 41–61 and 68–88; these read PNIK…CWLV and WLLF…TLAI. Residues 89 to 93 carry the Histidine box-1 motif; it reads HDISH. The required for C4-hydroxylase activity stretch occupies residues 95–99; the sequence is TAFGT. Positions 128–132 match the Histidine box-2 motif; that stretch reads HVDHH. A helical membrane pass occupies residues 200 to 220; it reads IFALWGIKAIVYLLASSLLGL. Positions 259 to 263 match the Histidine box-3 motif; the sequence is HVEHH.

Belongs to the fatty acid desaturase type 1 family. DEGS subfamily.

Its subcellular location is the endoplasmic reticulum membrane. It carries out the reaction a dihydroceramide + 2 Fe(II)-[cytochrome b5] + O2 + 2 H(+) = a phytoceramide + 2 Fe(III)-[cytochrome b5] + H2O. The catalysed reaction is an N-acylsphinganine + 2 Fe(II)-[cytochrome b5] + O2 + 2 H(+) = an N-acylsphing-4-enine + 2 Fe(III)-[cytochrome b5] + 2 H2O. It catalyses the reaction N-octanoylsphinganine + 2 Fe(II)-[cytochrome b5] + O2 + 2 H(+) = N-octanoyl-4-hydroxysphinganine + 2 Fe(III)-[cytochrome b5] + H2O. The enzyme catalyses an N-acylsphinganine + 2 Fe(II)-[cytochrome b5] + O2 + 2 H(+) = an N-acyl-(4R)-4-hydroxysphinganine + 2 Fe(III)-[cytochrome b5] + H2O. Its pathway is membrane lipid metabolism; sphingolipid biosynthesis. Bifunctional enzyme which acts both as a sphingolipid delta(4)-desaturase and a sphingolipid C4-monooxygenase. The sequence is that of Sphingolipid delta(4)-desaturase/C4-monooxygenase DES2 from Rattus norvegicus (Rat).